We begin with the raw amino-acid sequence, 845 residues long: Cadherin-related family member 5 (845 aa).

The first 25 residues, 1-25 (MGSWALLWPPLLFTGLLVRPPGTMA), serve as a signal peptide directing secretion. At 26 to 669 (QAQYCSVNKD…DKRFSVVDMA (644 aa)) the chain is on the extracellular side. Residues Asn44, Asn81, Asn140, Asn198, Asn297, Asn308, and Asn405 are each glycosylated (N-linked (GlcNAc...) asparagine). Cadherin domains lie at 71–124 (FRIQ…APEF), 125–237 (PFKT…PPWF), 249–354 (IQAQ…PPRF), and 355–459 (PQRL…PPST). Positions 452–661 (SEQEPPSTDV…SSGGGPSEDK (210 aa)) are disordered. Over residues 506–518 (SGTTLRPPTSSTP) the composition is skewed to low complexity. N-linked (GlcNAc...) asparagine glycosylation occurs at Asn526. Polar residues-rich tracts occupy residues 539–549 (TAQTPKPGTSQ), 556–594 (GTST…SHQP), and 602–611 (AQTPEAGTSQ). Tandem repeats lie at residues 540–570 (AQTP…SGGT), 571–601 (AQTP…GGGT), and 602–631 (AQTP…PGGG). Residues 540-645 (AQTPKPGTSQ…PEPGTSQPMP (106 aa)) are 4 X 31 AA approximate tandem repeats. One copy of the 4; truncated repeat lies at 632-645 (TAQTPEPGTSQPMP). A compositionally biased stretch (low complexity) spans 633 to 652 (AQTPEPGTSQPMPLSKSTPS). A helical membrane pass occupies residues 670–690 (ALGGVLGALLLLALLGLAVLV). Residues 691 to 845 (HKHYGPRLKC…DAPGGDDSYI (155 aa)) are Cytoplasmic-facing. The mediates interaction with USH1C and MYO7B and is required for proper localization to microvilli tips and function in microvilli organization stretch occupies residues 691-845 (HKHYGPRLKC…DAPGGDDSYI (155 aa)). A disordered region spans residues 724–789 (ANWAPVPSPT…KERRPEGGYK (66 aa)). The segment covering 729–762 (VPSPTHDPKPAEAPMPAEPAPPGPASPGGAPEPP) has biased composition (pro residues). Phosphoserine is present on Ser770. Position 810 is a phosphothreonine (Thr810). Residues 811-845 (LDVDGASDSGSGDEGEGAGRGGGPYDAPGGDDSYI) are disordered. Residues Ser817, Ser819, and Ser821 each carry the phosphoserine modification. Positions 835–845 (YDAPGGDDSYI) are enriched in low complexity.

As to quaternary structure, part of the IMAC/intermicrovillar adhesion complex/intermicrovillar tip-link complex composed of ANKS4B, MYO7B, USH1C, CDHR2 and CDHR5. Interacts (via cytoplasmic domain) with USH1C and MYO7B; required for proper localization of CDHR5 to microvilli tips and its function in brush border differentiation. In terms of processing, N- and O-glycosylated. As to expression, highest expression in kidney, liver, colon and small intestine. In kidney, expressed apically along brush border of proximal convoluted tubule but not in cortical collecting ducts. Isoform 1 is expressed primarily in adult small intestine and colon. Isoform 2 is highly expressed in fetal liver. Expressed in duodenum with higher expression in enterocytes along the villus axis and lower expression in crypts (at protein level).

It is found in the apical cell membrane. Its subcellular location is the cell projection. It localises to the microvillus membrane. Intermicrovillar adhesion molecule that forms, via its extracellular domain, calcium-dependent heterophilic complexes with CDHR2 on adjacent microvilli. Thereby, controls the packing of microvilli at the apical membrane of epithelial cells. Through its cytoplasmic domain, interacts with microvillus cytoplasmic proteins to form the intermicrovillar adhesion complex/IMAC. This complex plays a central role in microvilli and epithelial brush border differentiation. The sequence is that of Cadherin-related family member 5 from Homo sapiens (Human).